The primary structure comprises 1020 residues: Glycine dehydrogenase (decarboxylating), mitochondrial (1020 aa).

The N-terminal 35 residues, 1–35 (MQSCARAWGLRLGRGVGGGRRLAGGSGPCWAPRSR), are a transit peptide targeting the mitochondrion. Residues 21 to 46 (RLAGGSGPCWAPRSRDSSSGGGDSAA) form a disordered region. N6-acetyllysine occurs at positions 447, 514, 648, and 664. N6-(pyridoxal phosphate)lysine is present on Lys754.

Belongs to the GcvP family. As to quaternary structure, homodimer. Interacts with GCSH. The glycine cleavage system is composed of four proteins: P (GLDC), T (GCST), L (DLD) and H (GCSH). The cofactor is pyridoxal 5'-phosphate.

The protein localises to the mitochondrion. It carries out the reaction N(6)-[(R)-lipoyl]-L-lysyl-[glycine-cleavage complex H protein] + glycine + H(+) = N(6)-[(R)-S(8)-aminomethyldihydrolipoyl]-L-lysyl-[glycine-cleavage complex H protein] + CO2. With respect to regulation, stimulated by lipoic acid. Inhibited in presence of methylamine. The glycine cleavage system catalyzes the degradation of glycine. The P protein (GLDC) binds the alpha-amino group of glycine through its pyridoxal phosphate cofactor; CO(2) is released and the remaining methylamine moiety is then transferred to the lipoamide cofactor of the H protein (GCSH). This is Glycine dehydrogenase (decarboxylating), mitochondrial from Homo sapiens (Human).